Consider the following 42-residue polypeptide: Large ribosomal subunit protein bL36 (42 aa).

It belongs to the bacterial ribosomal protein bL36 family.

The polypeptide is Large ribosomal subunit protein bL36 (Wolbachia pipientis wMel).